A 175-amino-acid chain; its full sequence is Adenine phosphoribosyltransferase (175 aa).

Belongs to the purine/pyrimidine phosphoribosyltransferase family. Homodimer.

The protein localises to the cytoplasm. The enzyme catalyses AMP + diphosphate = 5-phospho-alpha-D-ribose 1-diphosphate + adenine. The protein operates within purine metabolism; AMP biosynthesis via salvage pathway; AMP from adenine: step 1/1. Functionally, catalyzes a salvage reaction resulting in the formation of AMP, that is energically less costly than de novo synthesis. The protein is Adenine phosphoribosyltransferase of Lactobacillus delbrueckii subsp. bulgaricus (strain ATCC 11842 / DSM 20081 / BCRC 10696 / JCM 1002 / NBRC 13953 / NCIMB 11778 / NCTC 12712 / WDCM 00102 / Lb 14).